We begin with the raw amino-acid sequence, 338 residues long: Large ribosomal subunit protein uL10 (338 aa).

Residues P297 to G338 form a disordered region. A compositionally biased stretch (low complexity) spans S298–T308. Basic and acidic residues predominate over residues A309–S325.

It belongs to the universal ribosomal protein uL10 family. In terms of assembly, part of the 50S ribosomal subunit. Forms part of the ribosomal stalk which helps the ribosome interact with GTP-bound translation factors. Forms a heptameric L10(L12)2(L12)2(L12)2 complex, where L10 forms an elongated spine to which the L12 dimers bind in a sequential fashion.

In terms of biological role, forms part of the ribosomal stalk, playing a central role in the interaction of the ribosome with GTP-bound translation factors. This is Large ribosomal subunit protein uL10 from Saccharolobus islandicus (strain Y.N.15.51 / Yellowstone #2) (Sulfolobus islandicus).